We begin with the raw amino-acid sequence, 103 residues long: MNVTLTKAELADLLFERVGLNKREAKDMVEGFFEEIRQALERGECVKLSGFGNFQLRDKPQRPGRNPKTGEEIPITARRVVTFHASQKLKAAVEQLSDASKQP.

Belongs to the bacterial histone-like protein family. In terms of assembly, heterodimer of an alpha and a beta chain.

This protein is one of the two subunits of integration host factor, a specific DNA-binding protein that functions in genetic recombination as well as in transcriptional and translational control. The protein is Integration host factor subunit alpha of Aromatoleum aromaticum (strain DSM 19018 / LMG 30748 / EbN1) (Azoarcus sp. (strain EbN1)).